The sequence spans 594 residues: Protein TRANSPORT INHIBITOR RESPONSE 1 (594 aa).

Residues 3–50 (KRIALSFPEEVLEHVFSFIQLDKDRNSVSLVCKSWYEIERWCRRKVFI) form the F-box domain. A 1D-myo-inositol hexakisphosphate-binding site is contributed by Lys74. An interaction with auxin-responsive proteins region spans residues 81 to 82 (DF). Residues 113–114 (KR) and Arg344 contribute to the 1D-myo-inositol hexakisphosphate site. An interaction with auxin-responsive proteins region spans residues 347-352 (PSEPFV). Residue 401–403 (RFR) participates in 1D-myo-inositol hexakisphosphate binding. Arg403 is a (indol-3-yl)acetate binding site. The interaction with auxin-responsive proteins stretch occupies residues 405–409 (CIIEP). Residue Arg436 participates in 1D-myo-inositol hexakisphosphate binding. 438–439 (SL) contacts (indol-3-yl)acetate. Positions 464–465 (AF) are interaction with auxin-responsive proteins. Residues 484 to 485 (RK) and Arg509 each bind 1D-myo-inositol hexakisphosphate.

In terms of assembly, interacts with auxin. Part of a SCF E3 ubiquitin ligase complex SCF(TIR1) composed of SKP1, CUL1, RBX1 and TIR1. SCF(TIR1) interacts with the COP9 signalosome (CSN) complex. Interacts with Aux/IAA proteins (IAA3, IAA7, IAA12 and IAA17) in an auxin-dependent manner. The interaction with IAA3, a negative regulator of auxin responses, is promoted by auxin, but repressed by juglon (5-hydroxy-1,4-naphthoquinone). Interactions with auxin-responsive proteins is inactivated by auxin antagonists. Expressed in roots, stems, leaves and flowers. In adult plants, mostly expressed in floral stigma, anther filaments, abscission zones and vascular tissues.

The protein resides in the nucleus. The protein operates within protein modification; protein ubiquitination. In terms of biological role, auxin receptor that mediates Aux/IAA proteins proteasomal degradation and auxin-regulated transcription. The SCF(TIR1) E3 ubiquitin ligase complex is involved in auxin-mediated signaling pathway that regulate root and hypocotyl growth, lateral root formation, cell elongation, and gravitropism. Appears to allow pericycle cells to overcome G2 arrest prior to lateral root development. Plays a role in ethylene signaling in roots. Confers sensitivity to the virulent bacterial pathogen P.syringae. The protein is Protein TRANSPORT INHIBITOR RESPONSE 1 (TIR1) of Arabidopsis thaliana (Mouse-ear cress).